Here is a 226-residue protein sequence, read N- to C-terminus: Probable GPI-anchored adhesin-like protein PGA28 (226 aa).

Positions 1–26 (MKFFAYFAVIALSSASLINLFKRATA) are cleaved as a signal peptide. The disordered stretch occupies residues 119 to 209 (DTEATTGSDT…SQQTSSHAGG (91 aa)). A compositionally biased stretch (low complexity) spans 131–148 (KAATGATTSAGTGVTKTS). Over residues 149–160 (ETGGVSSTANSE) the composition is skewed to polar residues. Residues 161–208 (AKSGSVTTSKSGSTSISESKTTSGSSSSGKSSSSTSSASSQQTSSHAG) show a composition bias toward low complexity. Ser-197 is lipidated: GPI-anchor amidated serine. Positions 198 to 226 (ASSQQTSSHAGGASGAFVSLLGLFAALLI) are cleaved as a propeptide — removed in mature form.

Predicted to be a cleavage substrate for KEX2.

The protein localises to the cell membrane. Putative adhesin which is involved in cell adhesion and virulence. Plays a role in Candida-bacterial interactions and subsequent regulation of filamentation. The polypeptide is Probable GPI-anchored adhesin-like protein PGA28 (PGA28) (Candida albicans (strain SC5314 / ATCC MYA-2876) (Yeast)).